Reading from the N-terminus, the 337-residue chain is Annexin E1 (337 aa).

4 Annexin repeats span residues 10 to 80, 81 to 154, 161 to 238, and 242 to 312; these read TGVT…MLYK, PRAQ…AVAT, DTHE…LAHD, and DPCC…LLWE.

Belongs to the annexin family.

It is found in the cell projection. Its subcellular location is the cilium. The protein localises to the flagellum. May function as a calcium-regulated structural element linking phospholipid bilayer and underlying axoneme. The polypeptide is Annexin E1 (ANXE1) (Giardia intestinalis (Giardia lamblia)).